Here is a 574-residue protein sequence, read N- to C-terminus: ATP-dependent lipid A-core flippase (574 aa).

The next 4 helical transmembrane spans lie at 11–31, 60–80, 156–176, and 244–264; these read LLSY…GFGI, WFPL…FMGG, YTNW…GVLV, and LNSP…VWLA. The ABC transmembrane type-1 domain occupies 23-304; it reads LLVLVGFGIN…LTDVNEKLQR (282 aa). Residues 335 to 570 enclose the ABC transporter domain; it reads VRFDHVTLEY…QGAYFQLHQR (236 aa). 368 to 375 provides a ligand contact to ATP; sequence GRSGAGKT.

It belongs to the ABC transporter superfamily. Lipid exporter (TC 3.A.1.106) family. Homodimer.

It is found in the cell inner membrane. The catalysed reaction is ATP + H2O + lipid A-core oligosaccharideSide 1 = ADP + phosphate + lipid A-core oligosaccharideSide 2.. In terms of biological role, involved in lipopolysaccharide (LPS) biosynthesis. Translocates lipid A-core from the inner to the outer leaflet of the inner membrane. Transmembrane domains (TMD) form a pore in the inner membrane and the ATP-binding domain (NBD) is responsible for energy generation. In Acinetobacter baylyi (strain ATCC 33305 / BD413 / ADP1), this protein is ATP-dependent lipid A-core flippase.